The following is a 103-amino-acid chain: MTHFENASIQKTANVYFDGKCISHNLTLPDGSRKSVGVILPATLEFNTGAPEIMEVLAGQCRVTLADAPASQTYEAGQSFNVPGNSHFTIEVTDTLHYVCHFG.

The protein belongs to the nucleoside phosphorylase PpnP family.

The catalysed reaction is a purine D-ribonucleoside + phosphate = a purine nucleobase + alpha-D-ribose 1-phosphate. The enzyme catalyses adenosine + phosphate = alpha-D-ribose 1-phosphate + adenine. It catalyses the reaction cytidine + phosphate = cytosine + alpha-D-ribose 1-phosphate. It carries out the reaction guanosine + phosphate = alpha-D-ribose 1-phosphate + guanine. The catalysed reaction is inosine + phosphate = alpha-D-ribose 1-phosphate + hypoxanthine. The enzyme catalyses thymidine + phosphate = 2-deoxy-alpha-D-ribose 1-phosphate + thymine. It catalyses the reaction uridine + phosphate = alpha-D-ribose 1-phosphate + uracil. It carries out the reaction xanthosine + phosphate = alpha-D-ribose 1-phosphate + xanthine. Functionally, catalyzes the phosphorolysis of diverse nucleosides, yielding D-ribose 1-phosphate and the respective free bases. Can use uridine, adenosine, guanosine, cytidine, thymidine, inosine and xanthosine as substrates. Also catalyzes the reverse reactions. The chain is Pyrimidine/purine nucleoside phosphorylase from Laribacter hongkongensis (strain HLHK9).